Consider the following 310-residue polypeptide: N-acetyl-gamma-glutamyl-phosphate reductase (310 aa).

Cysteine 117 is an active-site residue.

It belongs to the NAGSA dehydrogenase family. Type 2 subfamily.

Its subcellular location is the cytoplasm. It catalyses the reaction N-acetyl-L-glutamate 5-semialdehyde + phosphate + NADP(+) = N-acetyl-L-glutamyl 5-phosphate + NADPH + H(+). It functions in the pathway amino-acid biosynthesis; L-arginine biosynthesis; N(2)-acetyl-L-ornithine from L-glutamate: step 3/4. In terms of biological role, catalyzes the NADPH-dependent reduction of N-acetyl-5-glutamyl phosphate to yield N-acetyl-L-glutamate 5-semialdehyde. This chain is N-acetyl-gamma-glutamyl-phosphate reductase, found in Rhizobium rhizogenes (strain K84 / ATCC BAA-868) (Agrobacterium radiobacter).